The primary structure comprises 379 residues: Cytochrome b (379 aa).

The next 4 helical transmembrane spans lie at 33 to 53 (FGSLLGACLTIQIITGLFLAM), 77 to 98 (WTIRYLHANGASMFFLCLFIHV), 113 to 133 (WNVGIILLFSVMATAFMGYVL), and 178 to 198 (FFALHFILPFIISALVMIHLL). Heme b is bound by residues His-83 and His-97. 2 residues coordinate heme b: His-182 and His-196. His-201 is an a ubiquinone binding site. The next 4 helical transmembrane spans lie at 226–246 (TKDFLGLLLLILLLMTTALFY), 288–308 (LGGVLALILSILILMIIPFLQ), 320–340 (LSQFLFWILVADLLTLTWIGG), and 347–367 (FINIGQMASMLYFFLMIFIMP).

Belongs to the cytochrome b family. As to quaternary structure, the cytochrome bc1 complex contains 11 subunits: 3 respiratory subunits (MT-CYB, CYC1 and UQCRFS1), 2 core proteins (UQCRC1 and UQCRC2) and 6 low-molecular weight proteins (UQCRH/QCR6, UQCRB/QCR7, UQCRQ/QCR8, UQCR10/QCR9, UQCR11/QCR10 and a cleavage product of UQCRFS1). This cytochrome bc1 complex then forms a dimer. The cofactor is heme b.

The protein resides in the mitochondrion inner membrane. In terms of biological role, component of the ubiquinol-cytochrome c reductase complex (complex III or cytochrome b-c1 complex) that is part of the mitochondrial respiratory chain. The b-c1 complex mediates electron transfer from ubiquinol to cytochrome c. Contributes to the generation of a proton gradient across the mitochondrial membrane that is then used for ATP synthesis. The protein is Cytochrome b (MT-CYB) of Lepilemur ankaranensis (Ankarana sportive lemur).